The chain runs to 501 residues: Cobyric acid synthase (501 aa).

The GATase cobBQ-type domain occupies 251–446 (NIDIAIIRLS…LHGIFDSEEF (196 aa)). The Nucleophile role is filled by C332. The active site involves H438.

It belongs to the CobB/CobQ family. CobQ subfamily.

Its pathway is cofactor biosynthesis; adenosylcobalamin biosynthesis. In terms of biological role, catalyzes amidations at positions B, D, E, and G on adenosylcobyrinic A,C-diamide. NH(2) groups are provided by glutamine, and one molecule of ATP is hydrogenolyzed for each amidation. The polypeptide is Cobyric acid synthase (Clostridium botulinum (strain Alaska E43 / Type E3)).